The following is a 215-amino-acid chain: Pyrrolidone-carboxylate peptidase (215 aa).

Active-site residues include Glu-80, Cys-143, and His-167.

Belongs to the peptidase C15 family. As to quaternary structure, homotetramer.

The protein localises to the cytoplasm. It catalyses the reaction Release of an N-terminal pyroglutamyl group from a polypeptide, the second amino acid generally not being Pro.. Its function is as follows. Removes 5-oxoproline from various penultimate amino acid residues except L-proline. The sequence is that of Pyrrolidone-carboxylate peptidase from Bacillus cereus (strain ZK / E33L).